Consider the following 442-residue polypeptide: UDP-N-acetylmuramoylalanine--D-glutamate ligase (442 aa).

This sequence belongs to the MurCDEF family.

It is found in the cytoplasm. It catalyses the reaction UDP-N-acetyl-alpha-D-muramoyl-L-alanine + D-glutamate + ATP = UDP-N-acetyl-alpha-D-muramoyl-L-alanyl-D-glutamate + ADP + phosphate + H(+). The protein operates within cell wall biogenesis; peptidoglycan biosynthesis. Functionally, cell wall formation. Catalyzes the addition of glutamate to the nucleotide precursor UDP-N-acetylmuramoyl-L-alanine (UMA). This Buchnera aphidicola subsp. Baizongia pistaciae (strain Bp) protein is UDP-N-acetylmuramoylalanine--D-glutamate ligase.